Consider the following 426-residue polypeptide: Serine hydroxymethyltransferase (426 aa).

(6S)-5,6,7,8-tetrahydrofolate-binding positions include Leu113 and 117–119 (GHL). Lys222 bears the N6-(pyridoxal phosphate)lysine mark. A (6S)-5,6,7,8-tetrahydrofolate-binding site is contributed by 363-365 (SPF).

This sequence belongs to the SHMT family. In terms of assembly, homodimer. It depends on pyridoxal 5'-phosphate as a cofactor.

It is found in the cytoplasm. The enzyme catalyses (6R)-5,10-methylene-5,6,7,8-tetrahydrofolate + glycine + H2O = (6S)-5,6,7,8-tetrahydrofolate + L-serine. Its pathway is one-carbon metabolism; tetrahydrofolate interconversion. The protein operates within amino-acid biosynthesis; glycine biosynthesis; glycine from L-serine: step 1/1. Functionally, catalyzes the reversible interconversion of serine and glycine with tetrahydrofolate (THF) serving as the one-carbon carrier. This reaction serves as the major source of one-carbon groups required for the biosynthesis of purines, thymidylate, methionine, and other important biomolecules. Also exhibits THF-independent aldolase activity toward beta-hydroxyamino acids, producing glycine and aldehydes, via a retro-aldol mechanism. This is Serine hydroxymethyltransferase from Azobacteroides pseudotrichonymphae genomovar. CFP2.